A 188-amino-acid polypeptide reads, in one-letter code: NADH-quinone oxidoreductase subunit I 2 (188 aa).

4Fe-4S ferredoxin-type domains lie at 56-88 (HFLKRDEEGEIKCVACELCARICPCDCIEVVPY) and 98-127 (AKFEIDTARCLFCGLCEDACPADAIALGQQ). Residues Cys68, Cys71, Cys74, Cys78, Cys107, Cys110, Cys113, and Cys117 each contribute to the [4Fe-4S] cluster site.

Belongs to the complex I 23 kDa subunit family. As to quaternary structure, NDH-1 is composed of 14 different subunits. Subunits NuoA, H, J, K, L, M, N constitute the membrane sector of the complex. [4Fe-4S] cluster serves as cofactor.

The protein localises to the cell inner membrane. It carries out the reaction a quinone + NADH + 5 H(+)(in) = a quinol + NAD(+) + 4 H(+)(out). NDH-1 shuttles electrons from NADH, via FMN and iron-sulfur (Fe-S) centers, to quinones in the respiratory chain. The immediate electron acceptor for the enzyme in this species is believed to be ubiquinone. Couples the redox reaction to proton translocation (for every two electrons transferred, four hydrogen ions are translocated across the cytoplasmic membrane), and thus conserves the redox energy in a proton gradient. The chain is NADH-quinone oxidoreductase subunit I 2 from Rhizobium etli (strain ATCC 51251 / DSM 11541 / JCM 21823 / NBRC 15573 / CFN 42).